Here is a 288-residue protein sequence, read N- to C-terminus: Oxaloacetate decarboxylase (288 aa).

Serine 47 contributes to the substrate binding site. Aspartate 85 is a binding site for Mg(2+). Arginine 156 and histidine 232 together coordinate substrate.

It belongs to the isocitrate lyase/PEP mutase superfamily. Oxaloacetate decarboxylase family. In terms of assembly, homotetramer; dimer of dimers. It depends on Mg(2+) as a cofactor.

The catalysed reaction is oxaloacetate + H(+) = pyruvate + CO2. Functionally, catalyzes the decarboxylation of oxaloacetate into pyruvate. Seems to play a role in maintaining cellular concentrations of bicarbonate and pyruvate. This Bradyrhizobium sp. (strain ORS 278) protein is Oxaloacetate decarboxylase.